The following is a 241-amino-acid chain: Probable transcriptional regulatory protein SAR11_0592 (241 aa).

A disordered region spans residues 1–24 (MSGHSKWASIKHSKGKADKQRSKV).

It belongs to the TACO1 family.

Its subcellular location is the cytoplasm. This Pelagibacter ubique (strain HTCC1062) protein is Probable transcriptional regulatory protein SAR11_0592.